The following is a 380-amino-acid chain: XK-related protein 9 (380 aa).

The next 8 helical transmembrane spans lie at 10-30 (LLSA…AALV), 39-59 (VVCA…TQVF), 81-101 (LPVV…GIFI), 167-187 (CSLV…WALV), 228-248 (ALLL…WLLG), 264-284 (SLEF…FFNV), 294-314 (ITYY…LFVL), and 329-349 (TLMA…YLLL).

This sequence belongs to the XK family.

The protein resides in the cell membrane. The enzyme catalyses a 1,2-diacyl-sn-glycero-3-phospho-L-serine(in) = a 1,2-diacyl-sn-glycero-3-phospho-L-serine(out). Functionally, phospholipid scramblase that promotes phosphatidylserine exposure on apoptotic cell surface. Phosphatidylserine is a specific marker only present at the surface of apoptotic cells and acts as a specific signal for engulfment. The polypeptide is XK-related protein 9 (Tetraodon nigroviridis (Spotted green pufferfish)).